Here is a 440-residue protein sequence, read N- to C-terminus: MERDIYLIGLNHRTAGVEVRERFALTDCNVLEQGVVPIDDVVSEVLILSTCNRVEILAVGRGPEVVSRVLRGWSAARGQCEHDLAPYVYTHKGPEAIRHLFRVASSLDSMVVGEPQILGQLKDAYRKAIERNCTRVILNRLLHKAFSVAKRVRTETGVASSAVSISYAAVELAKRIFGEMNQYKAMLIGAGEMAELAATHLLHAGISKIYVANRTFERGRELARQFNGEAIHFEDLFERLADADIIISSTGAHEAIIRARDIKDVLRRRKHRPMFFIDIAVPRDIDPDVNNLDNVYLYDIDDLKEVVEENLAQRREEASKALTIVEEETGKFGQWLRSLELQPTIVDLIRRSERIAQDELARTLKRLGPVDDETRDALEAMLSSMVRKLNHEPITFLKRRHSEEDAGPRYIDIARRMFNLDDDNVPPDAHCDRRRHDEDN.

Substrate-binding positions include 50–53, serine 109, 114–116, and glutamine 120; these read TCNR and EPQ. The active-site Nucleophile is cysteine 51. 189 to 194 serves as a coordination point for NADP(+); it reads GAGEMA.

This sequence belongs to the glutamyl-tRNA reductase family. As to quaternary structure, homodimer.

The enzyme catalyses (S)-4-amino-5-oxopentanoate + tRNA(Glu) + NADP(+) = L-glutamyl-tRNA(Glu) + NADPH + H(+). The protein operates within porphyrin-containing compound metabolism; protoporphyrin-IX biosynthesis; 5-aminolevulinate from L-glutamyl-tRNA(Glu): step 1/2. Its function is as follows. Catalyzes the NADPH-dependent reduction of glutamyl-tRNA(Glu) to glutamate 1-semialdehyde (GSA). The polypeptide is Glutamyl-tRNA reductase (Nitratidesulfovibrio vulgaris (strain ATCC 29579 / DSM 644 / CCUG 34227 / NCIMB 8303 / VKM B-1760 / Hildenborough) (Desulfovibrio vulgaris)).